Reading from the N-terminus, the 500-residue chain is L-arabinose isomerase (500 aa).

Mn(2+) is bound by residues E306, E333, H350, and H450.

This sequence belongs to the arabinose isomerase family. As to quaternary structure, homohexamer. It depends on Mn(2+) as a cofactor.

It catalyses the reaction beta-L-arabinopyranose = L-ribulose. It participates in carbohydrate degradation; L-arabinose degradation via L-ribulose; D-xylulose 5-phosphate from L-arabinose (bacterial route): step 1/3. In terms of biological role, catalyzes the conversion of L-arabinose to L-ribulose. This chain is L-arabinose isomerase, found in Klebsiella pneumoniae subsp. pneumoniae (strain ATCC 700721 / MGH 78578).